A 427-amino-acid polypeptide reads, in one-letter code: MTEFKISDLLVKPLSESFSCIVCTDLLSESHDKIQVNQCPHGHCLCSDCWTKQIENKKKECPICRAKVKLEFLSRNLFLESEFKKKKVYCKYQYKEEKEDGKIIKDEENGCKDIIRIEEMETHFKNCQYAFINCPNGDECKINSRFRKNQLEEHNKSCEYLKVPCQYCKTPIAKINKDHLESECQSYKIKCTHCKLEMLRMELSEHLEVCPEMTIQCKYKEGGCQVSFQRKHQANHLASENNHIGFIQNIIDQHRILLDESDRCFKRLKCSHETLEKRLTNINKYSNQWVIENWMQKVIDIPNDEVTSTKRVSCPMFYFNSRKYNVSCFPNGFTPANKDYISLYLHLHEASPNINIKFSFEIVNSDPTKSIKKEKNSYFQNDKGIGWEKFAECKTINTLGEGFVVGNKLTIKFEIEIPQTIDPLTTK.

An RING-type zinc finger spans residues 20–65 (CIVCTDLLSESHDKIQVNQCPHGHCLCSDCWTKQIENKKKECPICR). 2 consecutive TRAF-type zinc fingers follow at residues 122–178 (THFK…INKD) and 178–234 (DHLE…KHQA). Residues 284-415 (KYSNQWVIEN…GNKLTIKFEI (132 aa)) enclose the MATH domain.

Belongs to the TNF receptor-associated factor family. A subfamily.

Its subcellular location is the cytoplasm. Functionally, probable adapter protein and signal transducer that links members of the tumor necrosis factor receptor family to different signaling pathways by association with the receptor cytoplasmic domain and kinases. The polypeptide is TNF receptor-associated factor family protein DDB_G0285149 (Dictyostelium discoideum (Social amoeba)).